The sequence spans 116 residues: Spexin (116 aa).

A signal peptide spans 1–26 (MKGPSVLAVTAVVLLLVLSALENSSG). Positions 27–35 (APQRLSEKR) are excised as a propeptide. Glutamine 49 carries the post-translational modification Glutamine amide. Propeptides lie at residues 50-116 (GRRF…LFNW) and 74-116 (PDLE…LFNW). Residues 52–77 (RFLSDQSRRKELADRPPPERRNPDLE) form a disordered region. Basic and acidic residues predominate over residues 53–75 (FLSDQSRRKELADRPPPERRNPD).

It belongs to the spexin family.

It is found in the secreted. Its subcellular location is the extracellular space. It localises to the cytoplasmic vesicle. The protein localises to the secretory vesicle. Functionally, plays a role as a central modulator of cardiovascular and renal function and nociception. Also plays a role in energy metabolism and storage. Inhibits adrenocortical cell proliferation with minor stimulation on corticosteroid release. Its function is as follows. Acts as a ligand for galanin receptors GALR2 and GALR3. Intracerebroventricular administration of the peptide induces an increase in arterial blood pressure, a decrease in both heart rate and renal excretion and delayed natriuresis. Intraventricular administration of the peptide induces antinociceptive activity. Also induces contraction of muscarinic-like stomach smooth muscles. Intraperitoneal administration of the peptide induces a reduction in food consumption and body weight. Inhibits long chain fatty acid uptake into adipocytes. Intracerebroventricular administration of the peptide induces a decrease in heart rate, but no change in arterial pressure, and an increase in urine flow rate. Intraventricular administration of the peptide induces antinociceptive activity. The sequence is that of Spexin (Spx) from Mus musculus (Mouse).